Here is a 70-residue protein sequence, read N- to C-terminus: PDKYRVVYTDYQRLELEKEFHYSRYITMNRKAELAKSLDLTERQIKIWFQNRRAKERKINKKKDVMVKEP.

The homeobox DNA-binding region spans 1 to 60 (PDKYRVVYTDYQRLELEKEFHYSRYITMNRKAELAKSLDLTERQIKIWFQNRRAKERKIN).

It belongs to the Caudal homeobox family.

It localises to the nucleus. This Lineus sanguineus (Ribbon worm) protein is Homeobox protein CDX (CDX).